The chain runs to 793 residues: Transcription factor opdR (793 aa).

Disordered regions lie at residues 1–29, 60–113, and 457–476; these read MAQDQNVPLVATSPPRKRRRPPKSCDPCR, TASS…QSQN, and LDDEQFGPKTERLPRPQPSE. Positions 25–53 form a DNA-binding region, zn(2)-C6 fungal-type; it reads CDPCRRRKVRCDRKFPCGQCERARTALQC.

The protein localises to the nucleus. Functionally, transcription factor; part of the gene cluster that mediates the biosynthesis of oxopyrrolidines, polyketide-amino acid hybrid compounds with feature structures of tetramic acid. The sequence is that of Transcription factor opdR from Penicillium oxalicum (strain 114-2 / CGMCC 5302) (Penicillium decumbens).